The chain runs to 274 residues: Penicillin-insensitive murein endopeptidase (274 aa).

Residues 1-19 (MNKTAIALLALLASSVSLA) form the signal peptide. 3 cysteine pairs are disulfide-bonded: Cys-44/Cys-265, Cys-187/Cys-235, and Cys-216/Cys-223. The Zn(2+) site is built by His-110, His-113, Asp-120, Asp-147, His-150, and His-211. Positions 227-274 (PLPPPGDGCGAELQSWFEPPKPGTTKPEKKTPPPLPPSCQALLDEHVI) are disordered.

It belongs to the peptidase M74 family. Dimer. The cofactor is Zn(2+).

Its subcellular location is the periplasm. Functionally, murein endopeptidase that cleaves the D-alanyl-meso-2,6-diamino-pimelyl amide bond that connects peptidoglycan strands. Likely plays a role in the removal of murein from the sacculus. This chain is Penicillin-insensitive murein endopeptidase, found in Escherichia coli O157:H7.